The chain runs to 438 residues: Aflatoxin cluster transcriptional coactivator aflS (438 aa).

One can recognise an HTH iclR-type domain in the interval 65–134 (LALYNQLLAC…PSPGHVAHSV (70 aa)). A DNA-binding region (H-T-H motif) is located at residues 95–114 (FEDVADIAGVPECRLRRLVR).

As to quaternary structure, interacts with aflR.

It localises to the nucleus. In terms of biological role, transcription factor; part of the gene cluster that mediates the biosynthesis of aflatoxin, a polyketide-derived furanocoumarin which is part of the most toxic and carcinogenic compounds among the known mycotoxins. AflS exhibits no DNA-binding capability on its own, but forms a complex with the other aflatoxin cluster transcription factor aflR and acts as a modulator of aflR's DNA-binding by decreasing its DNA-binding affinity. This is Aflatoxin cluster transcriptional coactivator aflS from Aspergillus flavus (strain ATCC 200026 / FGSC A1120 / IAM 13836 / NRRL 3357 / JCM 12722 / SRRC 167).